We begin with the raw amino-acid sequence, 412 residues long: Non-specific lipid-transfer protein-like 2 (412 aa).

Positions 410 to 412 (SKI) match the Microbody targeting signal motif.

This sequence belongs to the thiolase-like superfamily. Thiolase family. Expressed in intestine, hypodermis and body-wall muscle.

It localises to the peroxisome. It carries out the reaction choloyl-CoA + propanoyl-CoA = 3alpha,7alpha,12alpha-trihydroxy-24-oxo-5beta-cholestan-26-oyl-CoA + CoA. Inhibited by acetyl-CoA. Its function is as follows. Catalyzes the thiolytic cleavage of 3-ketoacyl-CoA with 8-16 carbon residues in the acyl group using a ping-pong mechanism whereby binding to 3-ketooctanoyl-CoA results in the release of acetyl-CoA and the subsequent addition of CoA produces 3-ketohexanohyl-CoA. Involved in the biosynthesis of the dauer pheromone by providing short chains of fatty acid that are attached to the ascarylose sugars of the pheromone. The protein is Non-specific lipid-transfer protein-like 2 of Caenorhabditis elegans.